The sequence spans 986 residues: Bifunctional glutamine synthetase adenylyltransferase/adenylyl-removing enzyme (986 aa).

The interval 1-470 (MAAVAKRTVT…ERHYAALFET (470 aa)) is adenylyl removase. The segment at 476–986 (AGIGNLVFTG…FDLLLRAGRP (511 aa)) is adenylyl transferase.

The protein belongs to the GlnE family. The cofactor is Mg(2+).

It catalyses the reaction [glutamine synthetase]-O(4)-(5'-adenylyl)-L-tyrosine + phosphate = [glutamine synthetase]-L-tyrosine + ADP. It carries out the reaction [glutamine synthetase]-L-tyrosine + ATP = [glutamine synthetase]-O(4)-(5'-adenylyl)-L-tyrosine + diphosphate. Its function is as follows. Involved in the regulation of glutamine synthetase GlnA, a key enzyme in the process to assimilate ammonia. When cellular nitrogen levels are high, the C-terminal adenylyl transferase (AT) inactivates GlnA by covalent transfer of an adenylyl group from ATP to specific tyrosine residue of GlnA, thus reducing its activity. Conversely, when nitrogen levels are low, the N-terminal adenylyl removase (AR) activates GlnA by removing the adenylyl group by phosphorolysis, increasing its activity. The regulatory region of GlnE binds the signal transduction protein PII (GlnB) which indicates the nitrogen status of the cell. This chain is Bifunctional glutamine synthetase adenylyltransferase/adenylyl-removing enzyme, found in Mesorhizobium japonicum (strain LMG 29417 / CECT 9101 / MAFF 303099) (Mesorhizobium loti (strain MAFF 303099)).